We begin with the raw amino-acid sequence, 595 residues long: Coronatine-insensitive protein homolog 1a (595 aa).

The region spanning 20–62 is the F-box domain; the sequence is WVPDEALHLVMGHVEDPRDREAASRVCRRWHRIDALTRKHVTV. Positions 90, 351, 389, 412, and 499 each coordinate jasmonate.

Interacts with TIFY6A/JAZ3, TIFY6B/JAZ4 and TIFY11D/JAZ12 in a coronatine-dependent manner. Interacts with TIFY9/JAZ5, TIFY10A/JAZ6, TIFY10B/JAZ7, TIFY11A/JAZ9 and TIFY11C/JAZ11 in a coronatine-dependent manner.

Its function is as follows. Involved in jasmonate (JA) signaling. Required for jasmonate signaling in plant defense responses. Can complement Arabidopsis coi1-1 mutant and restore jasmonate signaling. Required for JA-regulated defense responses to infestation by the leaffolder Cnaphalocrocis medinalis. May act on an initial response of jasmonate-regulated gene expression toward drought tolerance as part of a BHLH148-TIFY11D/JAZ12-COI1A complex. Component of SCF(COI1) E3 ubiquitin ligase complexes, which may mediate the ubiquitination and subsequent proteasomal degradation of target proteins, including TIFY/JAZ family. This chain is Coronatine-insensitive protein homolog 1a, found in Oryza sativa subsp. indica (Rice).